The following is a 47-amino-acid chain: Large ribosomal subunit protein eL40 (47 aa).

Belongs to the eukaryotic ribosomal protein eL40 family.

The sequence is that of Large ribosomal subunit protein eL40 from Methanococcus maripaludis (strain C5 / ATCC BAA-1333).